A 311-amino-acid chain; its full sequence is Methionyl-tRNA formyltransferase (311 aa).

Residue serine 112 to proline 115 coordinates (6S)-5,6,7,8-tetrahydrofolate.

This sequence belongs to the Fmt family.

It carries out the reaction L-methionyl-tRNA(fMet) + (6R)-10-formyltetrahydrofolate = N-formyl-L-methionyl-tRNA(fMet) + (6S)-5,6,7,8-tetrahydrofolate + H(+). In terms of biological role, attaches a formyl group to the free amino group of methionyl-tRNA(fMet). The formyl group appears to play a dual role in the initiator identity of N-formylmethionyl-tRNA by promoting its recognition by IF2 and preventing the misappropriation of this tRNA by the elongation apparatus. The sequence is that of Methionyl-tRNA formyltransferase from Sinorhizobium medicae (strain WSM419) (Ensifer medicae).